The following is a 63-amino-acid chain: Large ribosomal subunit protein bL28 (63 aa).

This sequence belongs to the bacterial ribosomal protein bL28 family.

The sequence is that of Large ribosomal subunit protein bL28 from Clostridium botulinum (strain ATCC 19397 / Type A).